A 656-amino-acid polypeptide reads, in one-letter code: Pyoverdine export ATP-binding/permease protein PvdT (656 aa).

The 240-residue stretch at I6–V245 folds into the ABC transporter domain. Residue G43–S50 coordinates ATP. Transmembrane regions (helical) follow at residues A284–G304, I538–V558, L589–L609, and L619–M639.

It belongs to the ABC transporter superfamily. Macrolide exporter (TC 3.A.1.122) family. As to quaternary structure, part of the tripartite efflux system PvdRT-OpmQ, which is composed of an inner membrane component with both ATPase and permease domains, PvdT, a periplasmic membrane fusion protein, PvdR, and an outer membrane component, OpmQ.

It is found in the cell inner membrane. In terms of biological role, part of the tripartite efflux system PvdRT-OpmQ required for the secretion into the extracellular milieu of the siderophore pyoverdine (PVD), which is involved in iron acquisition. This subunit binds PVD and drives its secretion by hydrolyzing ATP. The system is responsible for export of newly synthesized PVD after the final steps of biosynthesis have taken place in the periplasm. It is also responsible for recycling of PVD after internalization of ferri-PVD into the periplasm by the outer-membrane receptor FpvA and release of iron from PVD, thus making PVD available for new cycles of iron uptake. The sequence is that of Pyoverdine export ATP-binding/permease protein PvdT from Pseudomonas syringae pv. tomato (strain ATCC BAA-871 / DC3000).